The primary structure comprises 136 residues: Globin-2 (136 aa).

In terms of domain architecture, Globin spans 1–134 (VSQADIAAVQ…ILSQMKIALS (134 aa)). Position 89 (His89) interacts with heme b.

Belongs to the globin family. In terms of assembly, homodimer.

This Phreagena soyoae (Deep-sea cold-seep clam) protein is Globin-2.